We begin with the raw amino-acid sequence, 340 residues long: Nicotianamine synthase 9 (340 aa).

Belongs to the nicotianamine synthase (NAS)-like family. Homotrimer.

The enzyme catalyses 3 S-adenosyl-L-methionine = nicotianamine + 3 S-methyl-5'-thioadenosine + 3 H(+). Its function is as follows. Synthesizes nicotianamine, a polyamine that is the first intermediate in the synthesis of the phytosiderophores of the mugineic acid type found in gramineae which serves as a sensor for the physiological iron status within the plant, and/or might be involved in the transport of iron. The sequence is that of Nicotianamine synthase 9 (NAS9) from Hordeum vulgare (Barley).